The chain runs to 244 residues: 1-(5-phosphoribosyl)-5-[(5-phosphoribosylamino)methylideneamino] imidazole-4-carboxamide isomerase (244 aa).

Asp8 functions as the Proton acceptor in the catalytic mechanism. The active-site Proton donor is the Asp129.

It belongs to the HisA/HisF family.

The protein resides in the cytoplasm. It catalyses the reaction 1-(5-phospho-beta-D-ribosyl)-5-[(5-phospho-beta-D-ribosylamino)methylideneamino]imidazole-4-carboxamide = 5-[(5-phospho-1-deoxy-D-ribulos-1-ylimino)methylamino]-1-(5-phospho-beta-D-ribosyl)imidazole-4-carboxamide. The protein operates within amino-acid biosynthesis; L-histidine biosynthesis; L-histidine from 5-phospho-alpha-D-ribose 1-diphosphate: step 4/9. The protein is 1-(5-phosphoribosyl)-5-[(5-phosphoribosylamino)methylideneamino] imidazole-4-carboxamide isomerase of Maricaulis maris (strain MCS10) (Caulobacter maris).